Consider the following 441-residue polypeptide: Putative F-box protein At1g33530 (441 aa).

Residues 91 to 137 (TTLAVELPDVLVEEILQRLPVKYLVRLKSISKGWKSLIESDHLAEKH) enclose the F-box domain.

This Arabidopsis thaliana (Mouse-ear cress) protein is Putative F-box protein At1g33530.